A 234-amino-acid polypeptide reads, in one-letter code: 2-C-methyl-D-erythritol 4-phosphate cytidylyltransferase (234 aa).

The protein belongs to the IspD/TarI cytidylyltransferase family. IspD subfamily.

It catalyses the reaction 2-C-methyl-D-erythritol 4-phosphate + CTP + H(+) = 4-CDP-2-C-methyl-D-erythritol + diphosphate. Its pathway is isoprenoid biosynthesis; isopentenyl diphosphate biosynthesis via DXP pathway; isopentenyl diphosphate from 1-deoxy-D-xylulose 5-phosphate: step 2/6. Functionally, catalyzes the formation of 4-diphosphocytidyl-2-C-methyl-D-erythritol from CTP and 2-C-methyl-D-erythritol 4-phosphate (MEP). This chain is 2-C-methyl-D-erythritol 4-phosphate cytidylyltransferase, found in Photobacterium profundum (strain SS9).